The chain runs to 474 residues: Calcium/calmodulin-dependent protein kinase type IV (474 aa).

Phosphoserine; by autocatalysis is present on residues Ser11 and Ser12. The Protein kinase domain occupies 42–296 (FEVESELGRG…TFQALQHPWV (255 aa)). ATP contacts are provided by residues 48–56 (LGRGATSIV) and Lys71. Thr53 carries an O-linked (GlcNAc) threonine glycan. Ser54 carries O-linked (GlcNAc) serine glycosylation. O-linked (GlcNAc) serine glycosylation occurs at Ser133. The active-site Proton acceptor is the Asp160. The O-linked (GlcNAc) serine glycan is linked to Ser185. Phosphothreonine; by CaMKK1 and CaMKK2 is present on Thr196. Residues 297-336 (TGKAANFVHMDTAQKKLQEFNARRKLKAAVKAVVASSRLG) form an autoinhibitory domain region. A PP2A-binding region spans residues 302-319 (NFVHMDTAQKKLQEFNAR). A calmodulin-binding region spans residues 318–337 (ARRKLKAAVKAVVASSRLGS). The residue at position 332 (Ser332) is a Phosphoserine; by autocatalysis. A disordered region spans residues 336–474 (GSASSSHTNI…PQQDAILPEY (139 aa)). Ser337 is subject to Phosphoserine. Residues Ser340, Ser341, and Ser352 are each glycosylated (O-linked (GlcNAc) serine). Polar residues predominate over residues 342 to 356 (HTNIQESNKASSEAQ). Basic and acidic residues predominate over residues 360–392 (DGKDKTDPLENKMQAGDHEAAKAAADETMKLQS). Over residues 393-413 (EEVEEEEGVKEEEEEEEEEEE) the composition is skewed to acidic residues. Residues 431-454 (QEMKRNSEETLKSVEEEMDPKAEE) are compositionally biased toward basic and acidic residues. Residues Ser437 and Ser443 each carry the phosphoserine modification.

Belongs to the protein kinase superfamily. CAMK Ser/Thr protein kinase family. CaMK subfamily. In terms of assembly, monomer. Interacts with protein phosphatase 2A (PPP2CA/PPP2CB); the interaction is mutually exclusive with binding to Ca(2+)/calmodulin. Phosphorylated by CaMKK1 and CaMKK2 on Thr-196. Dephosphorylated by protein phosphatase 2A. Autophosphorylated on Ser-11 and Ser-12. In terms of processing, glycosylation at Ser-185 modulates the phosphorylation of CaMK4 at Thr-196 and negatively regulates its activity toward CREB1 in basal conditions and during early inomycin stimulation. Post-translationally, the N-terminus of calspermin is blocked. Isoform 1 is expressed in brain and isoform 2 is testis specific.

It is found in the cytoplasm. The protein resides in the nucleus. The enzyme catalyses L-seryl-[protein] + ATP = O-phospho-L-seryl-[protein] + ADP + H(+). It carries out the reaction L-threonyl-[protein] + ATP = O-phospho-L-threonyl-[protein] + ADP + H(+). With respect to regulation, activated by Ca(2+)/calmodulin. Binding of calmodulin results in conformational change that relieves intrasteric autoinhibition and allows phosphorylation of Thr-196 within the activation loop by CaMKK1 or CaMKK2. Phosphorylation of Thr-196 results in a 10-20-fold increase in total activity to generate Ca(2+)/calmodulin-independent activity. Autophosphorylation of the N-terminus Ser-11 and Ser-12 is required for full activation. Inactivated by protein phosphatase 2A (PPP2CA/PPP2CB) which dephosphorylates Thr-196, thereby terminating autonomous activity and helping to maintain the enzyme in its autoinhibited state. Functionally, calcium/calmodulin-dependent protein kinase that operates in the calcium-triggered CaMKK-CaMK4 signaling cascade and regulates, mainly by phosphorylation, the activity of several transcription activators, such as CREB1, MEF2D, JUN and RORA, which play pivotal roles in immune response, inflammation, and memory consolidation. In the thymus, regulates the CD4(+)/CD8(+) double positive thymocytes selection threshold during T-cell ontogeny. In CD4 memory T-cells, is required to link T-cell antigen receptor (TCR) signaling to the production of IL2, IFNG and IL4 (through the regulation of CREB and MEF2). Regulates the differentiation and survival phases of osteoclasts and dendritic cells (DCs). Mediates DCs survival by linking TLR4 and the regulation of temporal expression of BCL2. Phosphorylates the transcription activator CREB1 on 'Ser-133' in hippocampal neuron nuclei and contribute to memory consolidation and long term potentiation (LTP) in the hippocampus. Can activate the MAP kinases MAPK1/ERK2, MAPK8/JNK1 and MAPK14/p38 and stimulate transcription through the phosphorylation of ELK1 and ATF2. Can also phosphorylate in vitro CREBBP, PRM2, MEF2A and STMN1/OP18. Its function is as follows. Heat-stable, acidic, calmodulin-binding protein. In Rattus norvegicus (Rat), this protein is Calcium/calmodulin-dependent protein kinase type IV (Camk4).